Consider the following 179-residue polypeptide: RNA polymerase sigma-E factor (179 aa).

The Polymerase core binding signature appears at 36–49 (DLLQTALVRTYGRW). The H-T-H motif DNA-binding region spans 130 to 149 (TEETAAALGMSAGTVKSTLH).

This sequence belongs to the sigma-70 factor family. ECF subfamily.

The protein localises to the cytoplasm. In terms of biological role, sigma factors are initiation factors that promote the attachment of RNA polymerase to specific initiation sites and are then released. This sigma factor is required for normal cell wall integrity; it is recruited by RNA polymerase to transcribe genes with cell wall-related functions. The protein is RNA polymerase sigma-E factor (sigE) of Streptomyces avermitilis (strain ATCC 31267 / DSM 46492 / JCM 5070 / NBRC 14893 / NCIMB 12804 / NRRL 8165 / MA-4680).